Consider the following 192-residue polypeptide: MAIRFQALEVVALSVPEAPRPIQEYLQDIDCLVGAIADPERTEKIAPDQYQLKMRPIGFLDLYKFQPIVTLKIWCDRHYQVHIKSLDYQLRGLEPFMKGFKLDVTGRLQPIADEQEQWLLEGEADLQVKLELPPPLWFTPKALVKKTGDRLLREILQRIKGQLLDQLVRDYQVWANGTRENSACGDRLETHP.

This is an uncharacterized protein from Picosynechococcus sp. (strain ATCC 27264 / PCC 7002 / PR-6) (Agmenellum quadruplicatum).